Here is a 564-residue protein sequence, read N- to C-terminus: Beta-hexosaminidase subunit B2 (564 aa).

The signal sequence occupies residues 1 to 19 (MKLKFIFLILFFIIGNSIG). N-linked (GlcNAc...) asparagine glycans are attached at residues Asn-43, Asn-84, Asn-303, and Asn-347. Residue Glu-357 is the Proton donor of the active site. Asn-364, Asn-377, Asn-439, Asn-524, and Asn-551 each carry an N-linked (GlcNAc...) asparagine glycan.

It belongs to the glycosyl hydrolase 20 family.

The protein localises to the lysosome. It carries out the reaction Hydrolysis of terminal non-reducing N-acetyl-D-hexosamine residues in N-acetyl-beta-D-hexosaminides.. In terms of biological role, responsible for the degradation of GM2 gangliosides, and a variety of other molecules containing terminal N-acetyl hexosamines. This is Beta-hexosaminidase subunit B2 (hexb2) from Dictyostelium discoideum (Social amoeba).